Consider the following 142-residue polypeptide: Hemoglobin subunit alpha-A (142 aa).

A Globin domain is found at 2-142 (VLSANDKTNV…VGNVLTAKYR (141 aa)). His59 is an O2 binding site. His88 serves as a coordination point for heme b.

It belongs to the globin family. Heterotetramer of two alpha chains and two beta chains. As to expression, red blood cells.

Its function is as follows. Involved in oxygen transport from the lung to the various peripheral tissues. The sequence is that of Hemoglobin subunit alpha-A (HBAA) from Accipiter gentilis (Northern goshawk).